Here is a 410-residue protein sequence, read N- to C-terminus: Arginine deiminase (410 aa).

Cys-400 (amidino-cysteine intermediate) is an active-site residue.

This sequence belongs to the arginine deiminase family.

It is found in the cytoplasm. The catalysed reaction is L-arginine + H2O = L-citrulline + NH4(+). It functions in the pathway amino-acid degradation; L-arginine degradation via ADI pathway; carbamoyl phosphate from L-arginine: step 1/2. The chain is Arginine deiminase (arcA) from Borreliella burgdorferi (strain ATCC 35210 / DSM 4680 / CIP 102532 / B31) (Borrelia burgdorferi).